Here is a 1079-residue protein sequence, read N- to C-terminus: Intraflagellar transport protein 80 (1079 aa).

The interval 495–514 (GDMIRPSTVQNQPSTQGLPN) is disordered. Polar residues predominate over residues 501–514 (STVQNQPSTQGLPN).

Its subcellular location is the cell projection. The protein resides in the cilium. The protein localises to the flagellum. It is found in the cytoplasm. It localises to the cytoskeleton. Its subcellular location is the flagellum axoneme. The protein resides in the flagellum basal body. Functionally, component of the intraflagellar transport complex B (IFT-B) involved in flagellar assembly. The protein is Intraflagellar transport protein 80 of Giardia intestinalis (strain ATCC 50803 / WB clone C6) (Giardia lamblia).